A 62-amino-acid chain; its full sequence is uncharacterized protein (62 aa).

4Fe-4S ferredoxin-type domains are found at residues 2–31 (AVTI…EIEG) and 32–62 (DKVV…VEPE). Residues C10, C15, C18, C22, C42, C45, C48, and C52 each contribute to the [4Fe-4S] cluster site.

[4Fe-4S] cluster serves as cofactor.

This is an uncharacterized protein from Methanocaldococcus jannaschii (strain ATCC 43067 / DSM 2661 / JAL-1 / JCM 10045 / NBRC 100440) (Methanococcus jannaschii).